Consider the following 170-residue polypeptide: Adenine phosphoribosyltransferase (170 aa).

This sequence belongs to the purine/pyrimidine phosphoribosyltransferase family. In terms of assembly, homodimer.

The protein resides in the cytoplasm. It carries out the reaction AMP + diphosphate = 5-phospho-alpha-D-ribose 1-diphosphate + adenine. It functions in the pathway purine metabolism; AMP biosynthesis via salvage pathway; AMP from adenine: step 1/1. Functionally, catalyzes a salvage reaction resulting in the formation of AMP, that is energically less costly than de novo synthesis. This Geobacillus thermodenitrificans (strain NG80-2) protein is Adenine phosphoribosyltransferase.